The following is a 439-amino-acid chain: Methylenetetrahydrofolate--tRNA-(uracil-5-)-methyltransferase TrmFO (439 aa).

G8 to G13 lines the FAD pocket.

The protein belongs to the MnmG family. TrmFO subfamily. FAD serves as cofactor.

It localises to the cytoplasm. The enzyme catalyses uridine(54) in tRNA + (6R)-5,10-methylene-5,6,7,8-tetrahydrofolate + NADH + H(+) = 5-methyluridine(54) in tRNA + (6S)-5,6,7,8-tetrahydrofolate + NAD(+). The catalysed reaction is uridine(54) in tRNA + (6R)-5,10-methylene-5,6,7,8-tetrahydrofolate + NADPH + H(+) = 5-methyluridine(54) in tRNA + (6S)-5,6,7,8-tetrahydrofolate + NADP(+). Catalyzes the folate-dependent formation of 5-methyl-uridine at position 54 (M-5-U54) in all tRNAs. The polypeptide is Methylenetetrahydrofolate--tRNA-(uracil-5-)-methyltransferase TrmFO (Dictyoglomus turgidum (strain DSM 6724 / Z-1310)).